The chain runs to 111 residues: Large ribosomal subunit protein uL22 (111 aa).

It belongs to the universal ribosomal protein uL22 family. Part of the 50S ribosomal subunit.

This protein binds specifically to 23S rRNA; its binding is stimulated by other ribosomal proteins, e.g. L4, L17, and L20. It is important during the early stages of 50S assembly. It makes multiple contacts with different domains of the 23S rRNA in the assembled 50S subunit and ribosome. Its function is as follows. The globular domain of the protein is located near the polypeptide exit tunnel on the outside of the subunit, while an extended beta-hairpin is found that lines the wall of the exit tunnel in the center of the 70S ribosome. The polypeptide is Large ribosomal subunit protein uL22 (Chlamydia caviae (strain ATCC VR-813 / DSM 19441 / 03DC25 / GPIC) (Chlamydophila caviae)).